A 149-amino-acid polypeptide reads, in one-letter code: Large ribosomal subunit protein bL9 (149 aa).

The protein belongs to the bacterial ribosomal protein bL9 family.

Binds to the 23S rRNA. This Salmonella dublin (strain CT_02021853) protein is Large ribosomal subunit protein bL9.